Reading from the N-terminus, the 343-residue chain is MITPQQALTRLVEQREIFHDEMLALMRQIMRGELTPVQIAGVITGLRVKKETVGEIAAAAEVMREFALEVPVQQREHLVDTCGTGGDAAHTFNISTTAAFVAAAAGARVAKHGGRSVSSTSGSADVLEALGVNLALTPEQVAASIDAIGIGFMFAPNFHGAMRHAAPVRRELGVRTLFNILGPLTNPANAPHQLLGVFHADLVGILVRVLQRLGSSHVMVVHGSDGMDEITLAGDTLIGELKDGEVSEYTINPREFGLQPCGSDALKVWDATQAKDMLLSVLDDLPGPARDIVLFNAGAAIYVADRAATLGEGIELAREAIRSGAARDKLQQLVAYSTQAKQA.

5-phospho-alpha-D-ribose 1-diphosphate-binding positions include Gly-83, 86 to 87, Thr-91, 93 to 96, 111 to 119, and Ser-123; these read GD, NIST, and KHGGRSVSS. Anthranilate is bound at residue Gly-83. Ser-95 serves as a coordination point for Mg(2+). Arg-169 is an anthranilate binding site. Residues Asp-228 and Glu-229 each contribute to the Mg(2+) site.

The protein belongs to the anthranilate phosphoribosyltransferase family. Homodimer. The cofactor is Mg(2+).

It catalyses the reaction N-(5-phospho-beta-D-ribosyl)anthranilate + diphosphate = 5-phospho-alpha-D-ribose 1-diphosphate + anthranilate. The protein operates within amino-acid biosynthesis; L-tryptophan biosynthesis; L-tryptophan from chorismate: step 2/5. Its function is as follows. Catalyzes the transfer of the phosphoribosyl group of 5-phosphorylribose-1-pyrophosphate (PRPP) to anthranilate to yield N-(5'-phosphoribosyl)-anthranilate (PRA). The sequence is that of Anthranilate phosphoribosyltransferase from Thiobacillus denitrificans (strain ATCC 25259 / T1).